The primary structure comprises 65 residues: Small ribosomal subunit protein eS31 (65 aa).

Residues cysteine 36, cysteine 39, cysteine 55, and cysteine 58 each contribute to the Zn(2+) site. Residues 36–58 form a C4-type zinc finger; sequence CPKCGSVMAFHREPVPRWHCGKC.

Belongs to the eukaryotic ribosomal protein eS31 family. Part of the 30S ribosomal subunit. Zn(2+) is required as a cofactor.

The sequence is that of Small ribosomal subunit protein eS31 from Pyrobaculum calidifontis (strain DSM 21063 / JCM 11548 / VA1).